A 127-amino-acid polypeptide reads, in one-letter code: Fumarate reductase subunit C (127 aa).

Transmembrane regions (helical) follow at residues 30–50 (ATVL…GSLV), 67–87 (LVIA…QTFF), and 107–127 (IIVL…LIVV).

This sequence belongs to the FrdC family. In terms of assembly, part of an enzyme complex containing four subunits: a flavoprotein (FrdA), an iron-sulfur protein (FrdB), and two hydrophobic anchor proteins (FrdC and FrdD).

It is found in the cell inner membrane. In terms of biological role, anchors the catalytic components of the fumarate reductase complex to the cell membrane, binds quinones. The polypeptide is Fumarate reductase subunit C (Vibrio cholerae serotype O1 (strain ATCC 39541 / Classical Ogawa 395 / O395)).